The following is a 284-amino-acid chain: 2-dehydro-3-deoxyphosphooctonate aldolase (284 aa).

Belongs to the KdsA family.

It localises to the cytoplasm. It carries out the reaction D-arabinose 5-phosphate + phosphoenolpyruvate + H2O = 3-deoxy-alpha-D-manno-2-octulosonate-8-phosphate + phosphate. Its pathway is carbohydrate biosynthesis; 3-deoxy-D-manno-octulosonate biosynthesis; 3-deoxy-D-manno-octulosonate from D-ribulose 5-phosphate: step 2/3. It participates in bacterial outer membrane biogenesis; lipopolysaccharide biosynthesis. The polypeptide is 2-dehydro-3-deoxyphosphooctonate aldolase (Burkholderia multivorans (strain ATCC 17616 / 249)).